Consider the following 281-residue polypeptide: Probable endonuclease 4 (281 aa).

Residues histidine 70, histidine 110, glutamate 146, aspartate 180, histidine 183, histidine 217, aspartate 230, histidine 232, and glutamate 262 each coordinate Zn(2+).

The protein belongs to the AP endonuclease 2 family. The cofactor is Zn(2+).

It catalyses the reaction Endonucleolytic cleavage to 5'-phosphooligonucleotide end-products.. Its function is as follows. Endonuclease IV plays a role in DNA repair. It cleaves phosphodiester bonds at apurinic or apyrimidinic (AP) sites, generating a 3'-hydroxyl group and a 5'-terminal sugar phosphate. This Nitratiruptor sp. (strain SB155-2) protein is Probable endonuclease 4.